We begin with the raw amino-acid sequence, 167 residues long: Glucose-6-phosphate isomerase (167 aa).

The active-site Proton donor is the Glu54. Residue His85 is part of the active site.

It belongs to the GPI family.

It is found in the cytoplasm. The enzyme catalyses alpha-D-glucose 6-phosphate = beta-D-fructose 6-phosphate. It functions in the pathway carbohydrate biosynthesis; gluconeogenesis. Its pathway is carbohydrate degradation; glycolysis; D-glyceraldehyde 3-phosphate and glycerone phosphate from D-glucose: step 2/4. Its function is as follows. Catalyzes the reversible isomerization of glucose-6-phosphate to fructose-6-phosphate. This Klebsiella oxytoca protein is Glucose-6-phosphate isomerase.